Here is a 383-residue protein sequence, read N- to C-terminus: S-adenosylmethionine synthase (383 aa).

H22 contacts ATP. D24 serves as a coordination point for Mg(2+). Residue E50 coordinates K(+). The L-methionine site is built by E63 and Q99. The tract at residues Q99–K109 is flexible loop. ATP-binding positions include D160–K162, D235, R241–K242, S258, and K262. D235 contributes to the L-methionine binding site. K266 lines the L-methionine pocket.

Belongs to the AdoMet synthase family. In terms of assembly, homotetramer; dimer of dimers. It depends on Mg(2+) as a cofactor. Requires K(+) as cofactor.

It localises to the cytoplasm. The catalysed reaction is L-methionine + ATP + H2O = S-adenosyl-L-methionine + phosphate + diphosphate. It participates in amino-acid biosynthesis; S-adenosyl-L-methionine biosynthesis; S-adenosyl-L-methionine from L-methionine: step 1/1. In terms of biological role, catalyzes the formation of S-adenosylmethionine (AdoMet) from methionine and ATP. The overall synthetic reaction is composed of two sequential steps, AdoMet formation and the subsequent tripolyphosphate hydrolysis which occurs prior to release of AdoMet from the enzyme. The polypeptide is S-adenosylmethionine synthase (Mycoplasma genitalium (strain ATCC 33530 / DSM 19775 / NCTC 10195 / G37) (Mycoplasmoides genitalium)).